The sequence spans 396 residues: Protein NDRG1-A (396 aa).

Residues arginine 326–cysteine 396 are disordered. The span at serine 327–glycine 340 shows a compositional bias: low complexity. Tandem repeats lie at residues glycine 340–glutamate 349, glycine 350–aspartate 359, glycine 360–aspartate 369, and glycine 370–threonine 379. Residues glycine 340–threonine 379 form a 4 X 10 AA tandem repeats of G-[NS]-R-S-R-[AS]-H-T-[DGN]-[DET] region. The segment covering histidine 346 to threonine 377 has biased composition (basic and acidic residues). Polar residues predominate over residues aspartate 378–lysine 390.

It belongs to the NDRG family.

In terms of biological role, may be involved in pronephros development, after specification of the pronephros. This Xenopus laevis (African clawed frog) protein is Protein NDRG1-A (ndrg1-a).